Consider the following 115-residue polypeptide: uncharacterized protein (115 aa).

A helical transmembrane segment spans residues 36–56 (SFFSLGLIACFCIFLIIVLSE).

The protein localises to the membrane. This is an uncharacterized protein from Saccharomyces cerevisiae (strain ATCC 204508 / S288c) (Baker's yeast).